The chain runs to 275 residues: Large ribosomal subunit protein uL2 (275 aa).

Positions 38 to 53 are enriched in polar residues; that stretch reads NSKAGRNNNGRITTRH. Disordered regions lie at residues 38 to 59 and 224 to 257; these read NSKA…GGHK and AMNP…KGFR.

This sequence belongs to the universal ribosomal protein uL2 family. Part of the 50S ribosomal subunit. Forms a bridge to the 30S subunit in the 70S ribosome.

Its function is as follows. One of the primary rRNA binding proteins. Required for association of the 30S and 50S subunits to form the 70S ribosome, for tRNA binding and peptide bond formation. It has been suggested to have peptidyltransferase activity; this is somewhat controversial. Makes several contacts with the 16S rRNA in the 70S ribosome. This Burkholderia thailandensis (strain ATCC 700388 / DSM 13276 / CCUG 48851 / CIP 106301 / E264) protein is Large ribosomal subunit protein uL2.